The chain runs to 286 residues: Alpha-ketoglutarate-dependent dioxygenase alkB homolog 3 (286 aa).

The interval 21–45 is disordered; the sequence is QAIAQPATTAKSHLHQKPGQTWKNK. The span at 22–31 shows a compositional bias: polar residues; it reads AIAQPATTAK. Substrate-binding positions include W115 and 141-143; that span reads YTY. Residues 172–278 enclose the Fe2OG dioxygenase domain; the sequence is TFNSLLCNLY…RVNLTFRTVY (107 aa). A (4R)-5-hydroxyleucine; alternate modification is found at L177. The residue at position 177 (L177) is a (4R)-5-oxoleucine; alternate. Position 179–181 (179–181) interacts with 2-oxoglutarate; the sequence is NLY. Residues H191 and D193 each contribute to the Fe cation site. D194 is a substrate binding site. H257 contacts Fe cation. 2-oxoglutarate is bound by residues 269–275 and R275; that span reads RVNLTFR.

This sequence belongs to the alkB family. As to quaternary structure, interacts with the ASCC complex composed of ASCC1, ASCC2 and ASCC3. Interacts directly with ASCC3, and is thereby recruited to the ASCC complex. Interacts with OTUD4; the interaction is direct. Interacts with USP7 and USP9X. Fe(2+) serves as cofactor. Ubiquitinated; undergoes 'Lys-48'-linked polyubiquitination. OTUD4 promotes USP7 and USP9X-dependent deubiquitination of 'Lys-48'-polyubiquitinated ALKBH3 promoting the repair of alkylated DNA lesions. Ubiquitous. Detected in heart, pancreas, skeletal muscle, thymus, testis, ovary, spleen, prostate, small intestine, peripheral blood leukocytes, urinary bladder and colon.

It localises to the nucleus. The protein localises to the cytoplasm. It catalyses the reaction an N(1)-methyladenosine in mRNA + 2-oxoglutarate + O2 = an adenosine in mRNA + formaldehyde + succinate + CO2. The enzyme catalyses a methylated nucleobase within DNA + 2-oxoglutarate + O2 = a nucleobase within DNA + formaldehyde + succinate + CO2. It carries out the reaction an N(1)-methyl-2'-deoxyadenosine in single-stranded DNA + 2-oxoglutarate + O2 = a 2'-deoxyadenosine in single-stranded DNA + formaldehyde + succinate + CO2 + H(+). The catalysed reaction is an N(3)-methyl-2'-deoxycytidine in single-stranded DNA + 2-oxoglutarate + O2 = a 2'-deoxycytidine in single-stranded DNA + formaldehyde + succinate + CO2 + H(+). It catalyses the reaction a 3,N(4)-etheno-2'-deoxycytidine in single-stranded DNA + 2-oxoglutarate + O2 + H2O = a 2'-deoxycytidine in single-stranded DNA + glyoxal + succinate + CO2. With respect to regulation, activated by ascorbate. Its function is as follows. Dioxygenase that mediates demethylation of DNA and RNA containing 1-methyladenosine (m1A). Repairs alkylated DNA containing 1-methyladenosine (m1A) and 3-methylcytosine (m3C) by oxidative demethylation. Has a strong preference for single-stranded DNA. Able to process alkylated m3C within double-stranded regions via its interaction with ASCC3, which promotes DNA unwinding to generate single-stranded substrate needed for ALKBH3. Can repair exocyclic 3,N4-ethenocytosine adducs in single-stranded DNA. Also acts on RNA. Demethylates N(1)-methyladenosine (m1A) RNA, an epigenetic internal modification of messenger RNAs (mRNAs) highly enriched within 5'-untranslated regions (UTRs) and in the vicinity of start codons. Requires molecular oxygen, alpha-ketoglutarate and iron. This chain is Alpha-ketoglutarate-dependent dioxygenase alkB homolog 3, found in Homo sapiens (Human).